A 174-amino-acid chain; its full sequence is Crossover junction endodeoxyribonuclease RuvC (174 aa).

Catalysis depends on residues Asp8, Glu67, and Asp139. Asp8, Glu67, and Asp139 together coordinate Mg(2+).

It belongs to the RuvC family. As to quaternary structure, homodimer which binds Holliday junction (HJ) DNA. The HJ becomes 2-fold symmetrical on binding to RuvC with unstacked arms; it has a different conformation from HJ DNA in complex with RuvA. In the full resolvosome a probable DNA-RuvA(4)-RuvB(12)-RuvC(2) complex forms which resolves the HJ. Mg(2+) serves as cofactor.

Its subcellular location is the cytoplasm. The catalysed reaction is Endonucleolytic cleavage at a junction such as a reciprocal single-stranded crossover between two homologous DNA duplexes (Holliday junction).. Functionally, the RuvA-RuvB-RuvC complex processes Holliday junction (HJ) DNA during genetic recombination and DNA repair. Endonuclease that resolves HJ intermediates. Cleaves cruciform DNA by making single-stranded nicks across the HJ at symmetrical positions within the homologous arms, yielding a 5'-phosphate and a 3'-hydroxyl group; requires a central core of homology in the junction. The consensus cleavage sequence is 5'-(A/T)TT(C/G)-3'. Cleavage occurs on the 3'-side of the TT dinucleotide at the point of strand exchange. HJ branch migration catalyzed by RuvA-RuvB allows RuvC to scan DNA until it finds its consensus sequence, where it cleaves and resolves the cruciform DNA. The chain is Crossover junction endodeoxyribonuclease RuvC from Pseudomonas putida (strain ATCC 47054 / DSM 6125 / CFBP 8728 / NCIMB 11950 / KT2440).